We begin with the raw amino-acid sequence, 798 residues long: Phenylalanine--tRNA ligase beta subunit (798 aa).

In terms of domain architecture, tRNA-binding spans 39–148; sequence FDAIEPIVVG…ESFRIGARLV (110 aa). In terms of domain architecture, B5 spans 402–478; that stretch reads WQAPVLRFRR…RVRGMDTIEP (77 aa). Mg(2+) is bound by residues D456, D462, E465, and E466. In terms of domain architecture, FDX-ACB spans 708-798; the sequence is PVYPPVRRDI…SLVEKLPVRI (91 aa).

It belongs to the phenylalanyl-tRNA synthetase beta subunit family. Type 1 subfamily. As to quaternary structure, tetramer of two alpha and two beta subunits. It depends on Mg(2+) as a cofactor.

It localises to the cytoplasm. The catalysed reaction is tRNA(Phe) + L-phenylalanine + ATP = L-phenylalanyl-tRNA(Phe) + AMP + diphosphate + H(+). This Nitratidesulfovibrio vulgaris (strain ATCC 29579 / DSM 644 / CCUG 34227 / NCIMB 8303 / VKM B-1760 / Hildenborough) (Desulfovibrio vulgaris) protein is Phenylalanine--tRNA ligase beta subunit.